The primary structure comprises 177 residues: ATP synthase subunit delta (177 aa).

This sequence belongs to the ATPase delta chain family. F-type ATPases have 2 components, F(1) - the catalytic core - and F(0) - the membrane proton channel. F(1) has five subunits: alpha(3), beta(3), gamma(1), delta(1), epsilon(1). F(0) has three main subunits: a(1), b(2) and c(10-14). The alpha and beta chains form an alternating ring which encloses part of the gamma chain. F(1) is attached to F(0) by a central stalk formed by the gamma and epsilon chains, while a peripheral stalk is formed by the delta and b chains.

It is found in the cell inner membrane. Functionally, f(1)F(0) ATP synthase produces ATP from ADP in the presence of a proton or sodium gradient. F-type ATPases consist of two structural domains, F(1) containing the extramembraneous catalytic core and F(0) containing the membrane proton channel, linked together by a central stalk and a peripheral stalk. During catalysis, ATP synthesis in the catalytic domain of F(1) is coupled via a rotary mechanism of the central stalk subunits to proton translocation. This protein is part of the stalk that links CF(0) to CF(1). It either transmits conformational changes from CF(0) to CF(1) or is implicated in proton conduction. In Pseudoalteromonas translucida (strain TAC 125), this protein is ATP synthase subunit delta.